The primary structure comprises 132 residues: Aspartate 1-decarboxylase (132 aa).

S25 functions as the Schiff-base intermediate with substrate; via pyruvic acid in the catalytic mechanism. A Pyruvic acid (Ser) modification is found at S25. Position 57 (T57) interacts with substrate. Y58 (proton donor) is an active-site residue. 73 to 75 (GAA) is a binding site for substrate.

This sequence belongs to the PanD family. As to quaternary structure, heterooctamer of four alpha and four beta subunits. Requires pyruvate as cofactor. Post-translationally, is synthesized initially as an inactive proenzyme, which is activated by self-cleavage at a specific serine bond to produce a beta-subunit with a hydroxyl group at its C-terminus and an alpha-subunit with a pyruvoyl group at its N-terminus.

The protein resides in the cytoplasm. The enzyme catalyses L-aspartate + H(+) = beta-alanine + CO2. It participates in cofactor biosynthesis; (R)-pantothenate biosynthesis; beta-alanine from L-aspartate: step 1/1. Functionally, catalyzes the pyruvoyl-dependent decarboxylation of aspartate to produce beta-alanine. This is Aspartate 1-decarboxylase from Geotalea uraniireducens (strain Rf4) (Geobacter uraniireducens).